Here is a 366-residue protein sequence, read N- to C-terminus: Phospho-N-acetylmuramoyl-pentapeptide-transferase (366 aa).

Transmembrane regions (helical) follow at residues 27–47 (AALF…ISSL), 71–91 (TPTM…LLWA), 93–113 (LSSI…AIGF), 134–154 (LGIE…AAQS), 174–194 (LMLN…VGAG), 205–225 (GLAI…AYLA), 245–265 (LAVI…FNAP), 268–288 (AIFM…TVAV), 297–317 (VIIG…VFWF), and 343–363 (QVVI…LSTL).

This sequence belongs to the glycosyltransferase 4 family. MraY subfamily. It depends on Mg(2+) as a cofactor.

It is found in the cell inner membrane. It catalyses the reaction UDP-N-acetyl-alpha-D-muramoyl-L-alanyl-gamma-D-glutamyl-meso-2,6-diaminopimeloyl-D-alanyl-D-alanine + di-trans,octa-cis-undecaprenyl phosphate = di-trans,octa-cis-undecaprenyl diphospho-N-acetyl-alpha-D-muramoyl-L-alanyl-D-glutamyl-meso-2,6-diaminopimeloyl-D-alanyl-D-alanine + UMP. Its pathway is cell wall biogenesis; peptidoglycan biosynthesis. Functionally, catalyzes the initial step of the lipid cycle reactions in the biosynthesis of the cell wall peptidoglycan: transfers peptidoglycan precursor phospho-MurNAc-pentapeptide from UDP-MurNAc-pentapeptide onto the lipid carrier undecaprenyl phosphate, yielding undecaprenyl-pyrophosphoryl-MurNAc-pentapeptide, known as lipid I. In Sinorhizobium fredii (strain NBRC 101917 / NGR234), this protein is Phospho-N-acetylmuramoyl-pentapeptide-transferase.